We begin with the raw amino-acid sequence, 316 residues long: Probable cell division protein WhiA (316 aa).

Positions 275–309 (TLKELGEMVASGKISKSGINHRLRKLDEIAEQLRT) form a DNA-binding region, H-T-H motif.

The protein belongs to the WhiA family.

In terms of biological role, involved in cell division and chromosome segregation. This Bacillus velezensis (strain DSM 23117 / BGSC 10A6 / LMG 26770 / FZB42) (Bacillus amyloliquefaciens subsp. plantarum) protein is Probable cell division protein WhiA.